The sequence spans 305 residues: Mitogen-activated protein kinase kinase 10 (305 aa).

Phosphoserine is present on serine 34. One can recognise a Protein kinase domain in the interval leucine 48–valine 302. Residues leucine 54–valine 62 and lysine 77 contribute to the ATP site. The Proton acceptor role is filled by aspartate 165. Threonine 200 carries the post-translational modification Phosphothreonine.

The protein belongs to the protein kinase superfamily. STE Ser/Thr protein kinase family. MAP kinase kinase subfamily. In terms of assembly, interacts with P.syringae type III effector HopF2.

The catalysed reaction is L-seryl-[protein] + ATP = O-phospho-L-seryl-[protein] + ADP + H(+). The enzyme catalyses L-threonyl-[protein] + ATP = O-phospho-L-threonyl-[protein] + ADP + H(+). It catalyses the reaction L-tyrosyl-[protein] + ATP = O-phospho-L-tyrosyl-[protein] + ADP + H(+). In Arabidopsis thaliana (Mouse-ear cress), this protein is Mitogen-activated protein kinase kinase 10 (MKK10).